We begin with the raw amino-acid sequence, 230 residues long: Urease accessory protein UreE (230 aa).

Composition is skewed to basic and acidic residues over residues His-182–His-193 and Ser-204–His-230. The interval His-182–His-230 is disordered.

This sequence belongs to the UreE family.

The protein localises to the cytoplasm. Its function is as follows. Involved in urease metallocenter assembly. Binds nickel. Probably functions as a nickel donor during metallocenter assembly. The sequence is that of Urease accessory protein UreE from Yersinia mollaretii.